The following is an 879-amino-acid chain: Alanine--tRNA ligase (879 aa).

Residues His567, His571, Cys669, and His673 each contribute to the Zn(2+) site.

It belongs to the class-II aminoacyl-tRNA synthetase family. Zn(2+) serves as cofactor.

The protein localises to the cytoplasm. It carries out the reaction tRNA(Ala) + L-alanine + ATP = L-alanyl-tRNA(Ala) + AMP + diphosphate. Its function is as follows. Catalyzes the attachment of alanine to tRNA(Ala) in a two-step reaction: alanine is first activated by ATP to form Ala-AMP and then transferred to the acceptor end of tRNA(Ala). Also edits incorrectly charged Ser-tRNA(Ala) and Gly-tRNA(Ala) via its editing domain. The sequence is that of Alanine--tRNA ligase from Lactobacillus acidophilus (strain ATCC 700396 / NCK56 / N2 / NCFM).